A 451-amino-acid chain; its full sequence is mRNA cleavage and polyadenylation factor CLP1 (451 aa).

ATP is bound by residues glutamate 33, lysine 72, and 133 to 138; that span reads NTGKTA.

It belongs to the Clp1 family. Clp1 subfamily. In terms of assembly, component of a pre-mRNA cleavage factor complex. Interacts directly with PCF11.

The protein localises to the nucleus. Required for endonucleolytic cleavage during polyadenylation-dependent pre-mRNA 3'-end formation. This is mRNA cleavage and polyadenylation factor CLP1 from Vanderwaltozyma polyspora (strain ATCC 22028 / DSM 70294 / BCRC 21397 / CBS 2163 / NBRC 10782 / NRRL Y-8283 / UCD 57-17) (Kluyveromyces polysporus).